The following is a 182-amino-acid chain: Large ribosomal subunit protein uL5 (182 aa).

The protein belongs to the universal ribosomal protein uL5 family. In terms of assembly, part of the 50S ribosomal subunit; part of the 5S rRNA/L5/L18/L25 subcomplex. Contacts the 5S rRNA and the P site tRNA. Forms a bridge to the 30S subunit in the 70S ribosome.

Its function is as follows. This is one of the proteins that bind and probably mediate the attachment of the 5S RNA into the large ribosomal subunit, where it forms part of the central protuberance. In the 70S ribosome it contacts protein S13 of the 30S subunit (bridge B1b), connecting the 2 subunits; this bridge is implicated in subunit movement. Contacts the P site tRNA; the 5S rRNA and some of its associated proteins might help stabilize positioning of ribosome-bound tRNAs. The polypeptide is Large ribosomal subunit protein uL5 (Borrelia duttonii (strain Ly)).